The sequence spans 311 residues: Homoserine kinase (311 aa).

88–98 (PEGLGLGSSGA) contributes to the ATP binding site.

Belongs to the GHMP kinase family. Homoserine kinase subfamily.

It localises to the cytoplasm. The enzyme catalyses L-homoserine + ATP = O-phospho-L-homoserine + ADP + H(+). It participates in amino-acid biosynthesis; L-threonine biosynthesis; L-threonine from L-aspartate: step 4/5. Catalyzes the ATP-dependent phosphorylation of L-homoserine to L-homoserine phosphate. The polypeptide is Homoserine kinase (Saccharolobus islandicus (strain Y.N.15.51 / Yellowstone #2) (Sulfolobus islandicus)).